We begin with the raw amino-acid sequence, 58 residues long: Large ribosomal subunit protein bL32c (58 aa).

Belongs to the bacterial ribosomal protein bL32 family.

It localises to the plastid. The protein resides in the chloroplast. This Chaetosphaeridium globosum (Charophycean green alga) protein is Large ribosomal subunit protein bL32c.